Here is a 94-residue protein sequence, read N- to C-terminus: uncharacterized protein (94 aa).

In terms of biological role, could be a silencing control element for the regulation of the restriction system. This is an uncharacterized protein from Herpetosiphon aurantiacus (Herpetosiphon giganteus).